Reading from the N-terminus, the 257-residue chain is Glutamate racemase (257 aa).

Residues 12–13 and 44–45 contribute to the substrate site; these read DS and YG. Catalysis depends on Cys-75, which acts as the Proton donor/acceptor. Residue 76–77 coordinates substrate; it reads NT. The active-site Proton donor/acceptor is Cys-185. Substrate is bound at residue 186 to 187; the sequence is TH.

This sequence belongs to the aspartate/glutamate racemases family.

The enzyme catalyses L-glutamate = D-glutamate. It participates in cell wall biogenesis; peptidoglycan biosynthesis. Its function is as follows. Provides the (R)-glutamate required for cell wall biosynthesis. This Clostridium botulinum (strain Kyoto / Type A2) protein is Glutamate racemase.